A 1432-amino-acid polypeptide reads, in one-letter code: DNA-directed RNA polymerase subunit beta (1432 aa).

This sequence belongs to the RNA polymerase beta chain family. The RNAP catalytic core consists of 2 alpha, 1 beta, 1 beta' and 1 omega subunit. When a sigma factor is associated with the core the holoenzyme is formed, which can initiate transcription.

It carries out the reaction RNA(n) + a ribonucleoside 5'-triphosphate = RNA(n+1) + diphosphate. Its function is as follows. DNA-dependent RNA polymerase catalyzes the transcription of DNA into RNA using the four ribonucleoside triphosphates as substrates. This Solibacter usitatus (strain Ellin6076) protein is DNA-directed RNA polymerase subunit beta.